We begin with the raw amino-acid sequence, 396 residues long: MAKKIVSDLDLKGKTVIVRADFNVPLKDGEITNDNRIVQALPTIQYIIEQGGKIVLFSHLGKVKEESDKAKLTLRPVAEDLSKKLDKEVVFVPETRGEKLEAAIKDLKEGDVLLVENTRYEDLDGKKESKNDPELGKYWASLGDVFVNDAFGTAHREHASNVGISTHLETAAGFLMDKEIKFIGGVVNDPHKPVVAILGGAKVSDKINVIKNLVNIADKIIIGGGMAYTFLKAQGKEIGISLLEEDKIDFAKDLLEKHGDKIVLPVDTKVAKEFSNDAKITVVPSDSIPADQEGMDIGPNTVKLFADELEGAHTVVWNGPMGVFEFSNFAQGTIGVCKAIANLKDAITIIGGGDSAAAAISLGFENDFTHISTGGGASLEYLEGKELPGIKAINNK.

Substrate contacts are provided by residues 21-23 (DFN), R36, 59-62 (HLGK), R119, and R156. ATP-binding positions include K206, G294, E325, and 352–355 (GGDS).

This sequence belongs to the phosphoglycerate kinase family. As to quaternary structure, monomer.

The protein localises to the cytoplasm. The enzyme catalyses (2R)-3-phosphoglycerate + ATP = (2R)-3-phospho-glyceroyl phosphate + ADP. It participates in carbohydrate degradation; glycolysis; pyruvate from D-glyceraldehyde 3-phosphate: step 2/5. The chain is Phosphoglycerate kinase from Staphylococcus aureus (strain bovine RF122 / ET3-1).